The sequence spans 207 residues: Uracil phosphoribosyltransferase (207 aa).

Residues Arg77, Arg102, and 129–137 (DPMLATGGS) each bind 5-phospho-alpha-D-ribose 1-diphosphate. Uracil contacts are provided by residues Ile192 and 197-199 (GDA). Asp198 contributes to the 5-phospho-alpha-D-ribose 1-diphosphate binding site.

Belongs to the UPRTase family. Requires Mg(2+) as cofactor.

The catalysed reaction is UMP + diphosphate = 5-phospho-alpha-D-ribose 1-diphosphate + uracil. The protein operates within pyrimidine metabolism; UMP biosynthesis via salvage pathway; UMP from uracil: step 1/1. Allosterically activated by GTP. Catalyzes the conversion of uracil and 5-phospho-alpha-D-ribose 1-diphosphate (PRPP) to UMP and diphosphate. This is Uracil phosphoribosyltransferase from Mycoplasma mycoides subsp. mycoides SC (strain CCUG 32753 / NCTC 10114 / PG1).